A 157-amino-acid polypeptide reads, in one-letter code: Putative pre-16S rRNA nuclease (157 aa).

It belongs to the YqgF nuclease family.

It is found in the cytoplasm. Could be a nuclease involved in processing of the 5'-end of pre-16S rRNA. The sequence is that of Putative pre-16S rRNA nuclease from Ruegeria sp. (strain TM1040) (Silicibacter sp.).